The sequence spans 1179 residues: Putative ankyrin repeat protein RF_0381 (1179 aa).

18 ANK repeats span residues 282–311 (NGYQ…MHRQ), 604–633 (NKDQ…NPNA), 637–666 (HGVI…DVNA), 670–699 (NGET…NIHA), 703–732 (NGET…DVNA), 736–765 (NGLT…DVNA), 769–798 (SGET…DVNA), 802–831 (NGET…NVNN), 833–860 (KTIL…DIHA), 864–893 (SGET…DIHA), 897–926 (SGET…DIHA), 930–959 (SGET…DIHA), 963–992 (SGET…DINT), 996–1025 (DGLT…DVNA), 1029–1058 (SGET…DVNA), 1062–1091 (DGLT…DVNA), 1095–1124 (SGET…DINT), and 1128–1157 (SGET…DINL).

The polypeptide is Putative ankyrin repeat protein RF_0381 (Rickettsia felis (strain ATCC VR-1525 / URRWXCal2) (Rickettsia azadi)).